Reading from the N-terminus, the 88-residue chain is Phosphocarrier protein HPr (88 aa).

The region spanning 1-88 (MVVKTVRVLN…RLFQNKFEEE (88 aa)) is the HPr domain. The active-site Pros-phosphohistidine intermediate is the histidine 15. A Phosphoserine; by HPrK/P modification is found at serine 46.

Belongs to the HPr family.

The protein resides in the cytoplasm. With respect to regulation, phosphorylation on Ser-46 inhibits the phosphoryl transfer from enzyme I to HPr. General (non sugar-specific) component of the phosphoenolpyruvate-dependent sugar phosphotransferase system (sugar PTS). This major carbohydrate active-transport system catalyzes the phosphorylation of incoming sugar substrates concomitantly with their translocation across the cell membrane. The phosphoryl group from phosphoenolpyruvate (PEP) is transferred to the phosphoryl carrier protein HPr by enzyme I. Phospho-HPr then transfers it to the PTS EIIA domain. The sequence is that of Phosphocarrier protein HPr (ptsH) from Treponema pallidum (strain Nichols).